The chain runs to 255 residues: Indole-3-glycerol phosphate synthase (255 aa).

The protein belongs to the TrpC family.

The enzyme catalyses 1-(2-carboxyphenylamino)-1-deoxy-D-ribulose 5-phosphate + H(+) = (1S,2R)-1-C-(indol-3-yl)glycerol 3-phosphate + CO2 + H2O. It functions in the pathway amino-acid biosynthesis; L-tryptophan biosynthesis; L-tryptophan from chorismate: step 4/5. The sequence is that of Indole-3-glycerol phosphate synthase from Streptococcus thermophilus (strain CNRZ 1066).